The sequence spans 250 residues: Enoyl-[acyl-carrier-protein] reductase [NADPH] FabL (250 aa).

Residues 13–16 (SRGV), 36–38 (ARS), 62–63 (NV), and Asn-89 each bind NADP(+). Active-site proton acceptor residues include Tyr-151 and Lys-158. NADP(+) contacts are provided by residues Lys-158 and 187-189 (IDT).

This sequence belongs to the short-chain dehydrogenases/reductases (SDR) family. As to quaternary structure, homotetramer.

It carries out the reaction a 2,3-saturated acyl-[ACP] + NADP(+) = a (2E)-enoyl-[ACP] + NADPH + H(+). The catalysed reaction is (2E)-butenoyl-[ACP] + NADPH + H(+) = butanoyl-[ACP] + NADP(+). The protein operates within lipid metabolism; fatty acid biosynthesis. With respect to regulation, inhibited by triclosan. Catalyzes the reduction of a carbon-carbon double bond in an enoyl moiety that is covalently linked to an acyl carrier protein (ACP). It confers resistance to triclosan. The polypeptide is Enoyl-[acyl-carrier-protein] reductase [NADPH] FabL (fabL) (Bacillus subtilis (strain 168)).